The chain runs to 369 residues: tRNA/tmRNA (uracil-C(5))-methyltransferase (369 aa).

S-adenosyl-L-methionine is bound by residues glutamine 190, tyrosine 218, asparagine 223, glutamate 239, and aspartate 301. Catalysis depends on cysteine 326, which acts as the Nucleophile. Glutamate 360 functions as the Proton acceptor in the catalytic mechanism.

The protein belongs to the class I-like SAM-binding methyltransferase superfamily. RNA M5U methyltransferase family. TrmA subfamily.

The catalysed reaction is uridine(54) in tRNA + S-adenosyl-L-methionine = 5-methyluridine(54) in tRNA + S-adenosyl-L-homocysteine + H(+). It catalyses the reaction uridine(341) in tmRNA + S-adenosyl-L-methionine = 5-methyluridine(341) in tmRNA + S-adenosyl-L-homocysteine + H(+). Dual-specificity methyltransferase that catalyzes the formation of 5-methyluridine at position 54 (m5U54) in all tRNAs, and that of position 341 (m5U341) in tmRNA (transfer-mRNA). The sequence is that of tRNA/tmRNA (uracil-C(5))-methyltransferase from Vibrio cholerae serotype O1 (strain ATCC 39541 / Classical Ogawa 395 / O395).